A 457-amino-acid chain; its full sequence is V-type ATP synthase beta chain (457 aa).

Belongs to the ATPase alpha/beta chains family.

Its function is as follows. Produces ATP from ADP in the presence of a proton gradient across the membrane. The V-type beta chain is a regulatory subunit. This chain is V-type ATP synthase beta chain, found in Clostridioides difficile (strain 630) (Peptoclostridium difficile).